We begin with the raw amino-acid sequence, 240 residues long: Mitochondrial transcription rescue factor 1 (240 aa).

A mitochondrion-targeting transit peptide spans 1 to 84 (MAMASVKLLA…ECIFPFSVRL (84 aa)). The interval 95 to 127 (KKSLQKVDEEDSDEESHHDEMSEQEEELEDDPT) is disordered. 2 positions are modified to phosphoserine: Ser106 and Ser116. The segment covering 116-126 (SEQEEELEDDP) has biased composition (acidic residues). One can recognise an S4 RNA-binding domain in the interval 142–217 (FRYDVVLKTG…LKKVFEEKTE (76 aa)).

Monomer. Interacts with POLRMT. Interacts (via S4 domain) with MTRFR (via C-terminus). Associates with mitoribosomal S39 large subunit, peptidyl tRNA and nascent chain.

Its subcellular location is the mitochondrion matrix. In terms of biological role, mitochondrial RNA-binding protein involved in mitochondrial transcription regulation. Functions as a protective factor to maintain proper mitochondrial RNA level during stress. Acts at the transcription level and its protective function depends on its RNA binding ability. Part of a mitoribosome-associated quality control pathway that prevents aberrant translation by responding to interruptions during elongation. As heterodimer with MTRF, ejects the unfinished nascent chain and peptidyl transfer RNA (tRNA), respectively, from stalled ribosomes. Recruitment of mitoribosome biogenesis factors to these quality control intermediates suggests additional roles for MTRES1 and MTRF during mitoribosome rescue. This chain is Mitochondrial transcription rescue factor 1, found in Homo sapiens (Human).